A 549-amino-acid polypeptide reads, in one-letter code: Ribosomal protein S6 kinase-like 1 (549 aa).

Residues 87–115 form the MIT domain; it reads IHVDPNKERREAVKLKITKYLRRAEEIFN. In terms of domain architecture, Protein kinase spans 145–539; sequence SAVEQLRGCR…VSKLKSHPFF (395 aa). ATP is bound by residues 151–159 and K177; that span reads RGCRVVGVI. Residues 260 to 325 form a disordered region; the sequence is LTPARLPSGH…SDLPKAPGGH (66 aa). Residue D412 is the Proton acceptor of the active site.

The protein belongs to the protein kinase superfamily. Ser/Thr protein kinase family. S6 kinase subfamily.

It catalyses the reaction L-seryl-[protein] + ATP = O-phospho-L-seryl-[protein] + ADP + H(+). It carries out the reaction L-threonyl-[protein] + ATP = O-phospho-L-threonyl-[protein] + ADP + H(+). This is Ribosomal protein S6 kinase-like 1 (RPS6KL1) from Pongo abelii (Sumatran orangutan).